The following is a 218-amino-acid chain: Small ribosomal subunit protein uS3c (218 aa).

One can recognise a KH type-2 domain in the interval 43–118 (IKNYVQKNTR…KLNIAITRIG (76 aa)).

This sequence belongs to the universal ribosomal protein uS3 family. In terms of assembly, part of the 30S ribosomal subunit.

The protein localises to the plastid. Its subcellular location is the chloroplast. The sequence is that of Small ribosomal subunit protein uS3c (rps3) from Gossypium barbadense (Sea Island cotton).